Consider the following 1491-residue polypeptide: CLIP-associating protein (1491 aa).

4 HEAT repeats span residues 44 to 82, 85 to 123, 163 to 201, and 402 to 440; these read CTDM…RLGS, NAYT…HRVL, QLSV…HVGD, and DAFC…YTHA. 2 disordered regions span residues 537 to 586 and 600 to 739; these read RERE…AVDT and LYSR…NNPV. Positions 542–551 are enriched in gly residues; sequence GGGGGTGTGT. A compositionally biased stretch (polar residues) spans 569 to 580; the sequence is GTLQKPTPSMRS. Phosphoserine is present on residues S582, S626, and S634. Residues 632–646 are compositionally biased toward polar residues; that stretch reads LNSNSGGTPATTPGS. Position 648 is a phosphothreonine (T648). 2 stretches are compositionally biased toward polar residues: residues 657–671 and 699–712; these read VSQS…SPST and PRST…SPTR. Phosphoserine is present on residues S806, S817, S820, S822, and S824. 2 HEAT repeats span residues 874–912 and 955–993; these read QQQL…VHAN and QLQL…TYCK. 2 disordered regions span residues 1065–1127 and 1167–1205; these read HMRR…SVEQ and GHLQ…ESAT. 3 stretches are compositionally biased toward low complexity: residues 1070–1097, 1111–1124, and 1181–1200; these read SQSC…QSPS, LSIS…RQSS, and ASLS…QSNT. 3 positions are modified to phosphoserine: S1120, S1123, and S1124. 2 HEAT repeats span residues 1289–1327 and 1408–1446; these read NKHF…SNKM and DAHL…VLGE.

This sequence belongs to the CLASP family. In terms of assembly, interacts with CLIP-190 and microtubules. As to expression, expressed in testis and ovary.

Its subcellular location is the cytoplasm. It is found in the cytoskeleton. The protein resides in the nucleus. It localises to the microtubule organizing center. The protein localises to the centrosome. Its subcellular location is the spindle. It is found in the cell projection. The protein resides in the growth cone. It localises to the cleavage furrow. In terms of biological role, microtubule plus-end tracking protein that promotes the stabilization of dynamic microtubules. Required for several aspects of mitotic spindle formation including the formation of the overlapping central spindle microtubules and kinetochore attachment. Required for the incorporation of tubulin subunits at the plus ends of kinetochore microtubules during poleward microtubule flux. Acts antagonistically to Klp10A and Klp67A to maintain metaphase spindle length. Also required for guidance of CNS axons downstream of Abl. May function to identify a subset of microtubules that probe the peripheral growth cone domain, where guidance signals exert their influence on cytoskeletal organization. Also required during oogenesis for the organization of the polarized microtubule network inside the 16-cell cyst that ensures oocyte differentiation. In Drosophila melanogaster (Fruit fly), this protein is CLIP-associating protein (chb).